Here is a 401-residue protein sequence, read N- to C-terminus: Chalcone synthase 3 (401 aa).

Residue cysteine 168 is part of the active site.

The protein belongs to the thiolase-like superfamily. Chalcone/stilbene synthases family.

The enzyme catalyses (E)-4-coumaroyl-CoA + 3 malonyl-CoA + 3 H(+) = 2',4,4',6'-tetrahydroxychalcone + 3 CO2 + 4 CoA. It participates in secondary metabolite biosynthesis; flavonoid biosynthesis. The primary product of this enzyme is 4,2',4',6'-tetrahydroxychalcone (also termed naringenin-chalcone or chalcone) which can under specific conditions spontaneously isomerize into naringenin. The protein is Chalcone synthase 3 (CHS3) of Sorghum bicolor (Sorghum).